The sequence spans 267 residues: Phosphate import ATP-binding protein PstB 2 (267 aa).

Positions 21-262 (LSTKDVHVYY…AKLQSTNDYV (242 aa)) constitute an ABC transporter domain. An ATP-binding site is contributed by 53 to 60 (GPSGSGKS).

Belongs to the ABC transporter superfamily. Phosphate importer (TC 3.A.1.7) family. The complex is composed of two ATP-binding proteins (PstB), two transmembrane proteins (PstC and PstA) and a solute-binding protein (PstS).

It localises to the cell membrane. The enzyme catalyses phosphate(out) + ATP + H2O = ADP + 2 phosphate(in) + H(+). In terms of biological role, part of the ABC transporter complex PstSACB involved in phosphate import. Responsible for energy coupling to the transport system. The protein is Phosphate import ATP-binding protein PstB 2 of Streptococcus pneumoniae (strain ATCC BAA-255 / R6).